Here is a 66-residue protein sequence, read N- to C-terminus: Large ribosomal subunit protein bL35 (66 aa).

The segment covering 1–26 has biased composition (basic residues); sequence MPKMKTHRGSAKRFKKTGSGKLKRSH. Residues 1 to 48 form a disordered region; sequence MPKMKTHRGSAKRFKKTGSGKLKRSHAYTSHLFANKSQKQKRKLRKSA.

The protein belongs to the bacterial ribosomal protein bL35 family.

This Bacillus licheniformis (strain ATCC 14580 / DSM 13 / JCM 2505 / CCUG 7422 / NBRC 12200 / NCIMB 9375 / NCTC 10341 / NRRL NRS-1264 / Gibson 46) protein is Large ribosomal subunit protein bL35.